We begin with the raw amino-acid sequence, 225 residues long: Protein-L-isoaspartate O-methyltransferase (225 aa).

S-adenosyl-L-homocysteine is bound by residues 57–60 (ATVS), H65, S89, 110–111 (EH), 142–143 (DG), T216, and Q221. The active site involves S60.

This sequence belongs to the methyltransferase superfamily. L-isoaspartyl/D-aspartyl protein methyltransferase family. In terms of assembly, monomer.

The protein localises to the cytoplasm. Its subcellular location is the cytosol. It catalyses the reaction [protein]-L-isoaspartate + S-adenosyl-L-methionine = [protein]-L-isoaspartate alpha-methyl ester + S-adenosyl-L-homocysteine. Functionally, initiates the repair of damaged proteins by catalyzing methyl esterification of L-isoaspartyl and D-aspartyl residues produced by spontaneous isomerization and racemization of L-aspartyl and L-asparaginyl residues in aging peptides and proteins. The polypeptide is Protein-L-isoaspartate O-methyltransferase (pcm-1) (Caenorhabditis elegans).